We begin with the raw amino-acid sequence, 67 residues long: Large ribosomal subunit protein uL29 (67 aa).

This sequence belongs to the universal ribosomal protein uL29 family.

This is Large ribosomal subunit protein uL29 from Sulfurihydrogenibium sp. (strain YO3AOP1).